The sequence spans 315 residues: Ribosomal RNA small subunit methyltransferase H (315 aa).

Residues 35–37 (GGH), Asp55, Phe79, Asp101, and Gln108 each bind S-adenosyl-L-methionine.

It belongs to the methyltransferase superfamily. RsmH family.

It is found in the cytoplasm. The catalysed reaction is cytidine(1402) in 16S rRNA + S-adenosyl-L-methionine = N(4)-methylcytidine(1402) in 16S rRNA + S-adenosyl-L-homocysteine + H(+). Functionally, specifically methylates the N4 position of cytidine in position 1402 (C1402) of 16S rRNA. This Photobacterium profundum (strain SS9) protein is Ribosomal RNA small subunit methyltransferase H.